We begin with the raw amino-acid sequence, 134 residues long: Methylmalonyl-CoA decarboxylase subunit gamma (134 aa).

The segment covering 28–38 has biased composition (low complexity); sequence APAARPAAAPA. A disordered region spans residues 28 to 67; it reads APAARPAAAPAPAAPKPAAAPAPAPAPKTTAAGAGAGANT. Residues 39–53 are compositionally biased toward pro residues; it reads PAAPKPAAAPAPAPA. Positions 54–67 are enriched in low complexity; the sequence is PKTTAAGAGAGANT. The Biotinyl-binding domain occupies 58–134; the sequence is AAGAGAGANT…NAGDILVVLS (77 aa). N6-biotinyllysine is present on lysine 100.

As to quaternary structure, the methylmalonyl-CoA decarboxylase is composed of four subunits: the carboxyltransferase alpha subunit (MmdA), the tunnel beta subunit (MmdB), the biotin-containing gamma subunit (MmdC) and the delta subunit (MmdD). Requires biotin as cofactor.

The protein resides in the cell membrane. It carries out the reaction (S)-methylmalonyl-CoA + Na(+)(in) + H(+)(out) = propanoyl-CoA + Na(+)(out) + CO2. In terms of biological role, biotin-containing subunit of the sodium ion pump methylmalonyl-CoA decarboxylase, which converts the chemical energy of a decarboxylation reaction into an electrochemical gradient of Na(+) ions across the cytoplasmic membrane, thereby creating a sodium ion motive force that is used for ATP synthesis. The sequence is that of Methylmalonyl-CoA decarboxylase subunit gamma from Propionigenium modestum.